The primary structure comprises 137 residues: ATP synthase epsilon chain (137 aa).

This sequence belongs to the ATPase epsilon chain family. As to quaternary structure, F-type ATPases have 2 components, CF(1) - the catalytic core - and CF(0) - the membrane proton channel. CF(1) has five subunits: alpha(3), beta(3), gamma(1), delta(1), epsilon(1). CF(0) has three main subunits: a, b and c.

It localises to the cell membrane. In terms of biological role, produces ATP from ADP in the presence of a proton gradient across the membrane. This chain is ATP synthase epsilon chain, found in Caldicellulosiruptor bescii (strain ATCC BAA-1888 / DSM 6725 / KCTC 15123 / Z-1320) (Anaerocellum thermophilum).